The chain runs to 906 residues: Protein translocase subunit SecA (906 aa).

Residues Q86, 104-108, and D511 contribute to the ATP site; that span reads GEGKT. Basic and acidic residues-rich tracts occupy residues 853–865 and 877–888; these read HESV…RHDE and VRREGPKVKRND. Residues 853–906 form a disordered region; sequence HESVIDNNQRHDEDEQEETPKVQQVRREGPKVKRNDPCPCGSGKKYKQCHGKVE. Residues C890, C892, C901, and H902 each contribute to the Zn(2+) site. Basic residues predominate over residues 896–906; the sequence is KKYKQCHGKVE.

Belongs to the SecA family. Monomer and homodimer. Part of the essential Sec protein translocation apparatus which comprises SecA, SecYEG and auxiliary proteins SecDF-YajC and YidC. Requires Zn(2+) as cofactor.

It is found in the cell inner membrane. The protein resides in the cytoplasm. The enzyme catalyses ATP + H2O + cellular proteinSide 1 = ADP + phosphate + cellular proteinSide 2.. Its function is as follows. Part of the Sec protein translocase complex. Interacts with the SecYEG preprotein conducting channel. Has a central role in coupling the hydrolysis of ATP to the transfer of proteins into and across the cell membrane, serving both as a receptor for the preprotein-SecB complex and as an ATP-driven molecular motor driving the stepwise translocation of polypeptide chains across the membrane. In Francisella tularensis subsp. novicida (strain U112), this protein is Protein translocase subunit SecA.